A 68-amino-acid polypeptide reads, in one-letter code: Large ribosomal subunit protein uL29 (68 aa).

The protein belongs to the universal ribosomal protein uL29 family.

This is Large ribosomal subunit protein uL29 from Chlorobaculum tepidum (strain ATCC 49652 / DSM 12025 / NBRC 103806 / TLS) (Chlorobium tepidum).